Consider the following 438-residue polypeptide: Putative truncated GMC-type inactive oxidoreductase L894 (438 aa).

Positions 1-26 (MYVFLLFSRYKIFYVYIKKMAHRSRC) are cleaved as a signal peptide. 79–109 (DIVIIGAGAAGCVLAYYLTKFSDLKIILLEA) provides a ligand contact to FAD.

It belongs to the GMC oxidoreductase family. Requires FAD as cofactor.

It localises to the virion. The polypeptide is Putative truncated GMC-type inactive oxidoreductase L894 (Acanthamoeba polyphaga (Amoeba)).